The chain runs to 200 residues: GTP cyclohydrolase-2 (200 aa).

49–53 (RVHSE) contacts GTP. Zn(2+)-binding residues include Cys-54, Cys-65, and Cys-67. Residues Gln-70, 92 to 94 (EGR), and Thr-114 each bind GTP. Catalysis depends on Asp-126, which acts as the Proton acceptor. Catalysis depends on Arg-128, which acts as the Nucleophile. Residues Thr-149 and Lys-154 each coordinate GTP.

Belongs to the GTP cyclohydrolase II family. Homodimer. Zn(2+) is required as a cofactor.

It carries out the reaction GTP + 4 H2O = 2,5-diamino-6-hydroxy-4-(5-phosphoribosylamino)-pyrimidine + formate + 2 phosphate + 3 H(+). It functions in the pathway cofactor biosynthesis; riboflavin biosynthesis; 5-amino-6-(D-ribitylamino)uracil from GTP: step 1/4. Its function is as follows. Catalyzes the conversion of GTP to 2,5-diamino-6-ribosylamino-4(3H)-pyrimidinone 5'-phosphate (DARP), formate and pyrophosphate. This chain is GTP cyclohydrolase-2, found in Klebsiella pneumoniae subsp. pneumoniae (strain ATCC 700721 / MGH 78578).